A 238-amino-acid chain; its full sequence is Small ribosomal subunit protein uS2c (238 aa).

It belongs to the universal ribosomal protein uS2 family.

It localises to the plastid. It is found in the chloroplast. In Oltmannsiellopsis viridis (Marine flagellate), this protein is Small ribosomal subunit protein uS2c (rps2).